The following is a 311-amino-acid chain: MGAPDSRVVRQHLLDLQSGIVAVLERFDGGRFREDAWQRPAGGGGITRVIEEGRFFERGGVNFSHVIGGAMPASATAHRPDLAGRTFEAMGVSLVLHPRNPYCPTVHMNVRFFIASHPEAAVPPPAAAPVWWFGGGMDLTPYYPYEEDVRNFHRACRAAVLPWGGEPEYRRLKEWCDRYFFLKHRNEPRGVGGLFFDDLGADGKTDFDAAFGLARSVGDAFLDAYLPIIERRRDVAYGERERDFQAYRRGRYVEFNLVFDRGTLFGLQSGGRTESILMSLPPVVKWRYDWQPEPGSAEARLYDEFLAPRDW.

Residue Ser-93 participates in substrate binding. Positions 97 and 107 each coordinate a divalent metal cation. The active-site Proton donor is His-107. Position 109-111 (109-111 (NVR)) interacts with substrate. Positions 153 and 184 each coordinate a divalent metal cation. Residues 252 to 287 (YVEFNLVFDRGTLFGLQSGGRTESILMSLPPVVKWR) form an important for dimerization region. A substrate-binding site is contributed by 270 to 272 (GGR).

This sequence belongs to the aerobic coproporphyrinogen-III oxidase family. In terms of assembly, homodimer. A divalent metal cation is required as a cofactor.

It localises to the cytoplasm. It catalyses the reaction coproporphyrinogen III + O2 + 2 H(+) = protoporphyrinogen IX + 2 CO2 + 2 H2O. The protein operates within porphyrin-containing compound metabolism; protoporphyrin-IX biosynthesis; protoporphyrinogen-IX from coproporphyrinogen-III (O2 route): step 1/1. Its function is as follows. Involved in the heme biosynthesis. Catalyzes the aerobic oxidative decarboxylation of propionate groups of rings A and B of coproporphyrinogen-III to yield the vinyl groups in protoporphyrinogen-IX. This is Oxygen-dependent coproporphyrinogen-III oxidase from Aromatoleum aromaticum (strain DSM 19018 / LMG 30748 / EbN1) (Azoarcus sp. (strain EbN1)).